The chain runs to 77 residues: DNA-directed RNA polymerase subunit epsilon (77 aa).

Belongs to the RNA polymerase subunit epsilon family. RNAP is composed of a core of 2 alpha, a beta and a beta' subunit. The core is associated with a delta subunit, and at least one of epsilon or omega. When a sigma factor is associated with the core the holoenzyme is formed, which can initiate transcription.

It carries out the reaction RNA(n) + a ribonucleoside 5'-triphosphate = RNA(n+1) + diphosphate. Functionally, a non-essential component of RNA polymerase (RNAP). In Streptococcus pneumoniae (strain Hungary19A-6), this protein is DNA-directed RNA polymerase subunit epsilon.